Consider the following 353-residue polypeptide: UPF0283 membrane protein YcjF (353 aa).

Residues 1-19 (MSEPLKPRIDFAEPLKEEP) show a composition bias toward basic and acidic residues. Positions 1 to 35 (MSEPLKPRIDFAEPLKEEPTSAFKAQQTFSEAESR) are disordered. The Periplasmic segment spans residues 1-69 (MSEPLKPRID…LRPKRSLWRK (69 aa)). A helical transmembrane segment spans residues 70-90 (MVMGGLALFGASVVGQGVQWT). At 91 to 99 (MNAWQTQDW) the chain is on the cytoplasmic side. Residues 100-120 (VALGGCAAGALIVGAGVGSVV) form a helical membrane-spanning segment. Residues 121–212 (TEWRRLWRLR…ARREISRFAA (92 aa)) are Periplasmic-facing. The helical transmembrane segment at 213 to 233 (ESTLMIAVSPLALVDMAFIAW) threads the bilayer. Residues 234–353 (RNLRLINRIA…LQKSKSSPEK (120 aa)) lie on the Cytoplasmic side of the membrane.

It belongs to the UPF0283 family.

The protein resides in the cell inner membrane. In Salmonella typhimurium (strain LT2 / SGSC1412 / ATCC 700720), this protein is UPF0283 membrane protein YcjF (ycjF).